A 443-amino-acid polypeptide reads, in one-letter code: Ribulose bisphosphate carboxylase large chain (443 aa).

Substrate-binding residues include Asn-89 and Thr-139. Residue Lys-141 is the Proton acceptor of the active site. Position 143 (Lys-143) interacts with substrate. Residues Lys-167, Asp-169, and Glu-170 each coordinate Mg(2+). Position 167 is an N6-carboxylysine (Lys-167). Catalysis depends on His-260, which acts as the Proton acceptor. 3 residues coordinate substrate: Arg-261, His-293, and Ser-345.

Belongs to the RuBisCO large chain family. Type I subfamily. Heterohexadecamer of 8 large chains and 8 small chains; disulfide-linked. The disulfide link is formed within the large subunit homodimers. It depends on Mg(2+) as a cofactor. The disulfide bond which can form in the large chain dimeric partners within the hexadecamer appears to be associated with oxidative stress and protein turnover.

The protein localises to the plastid. It localises to the chloroplast. The enzyme catalyses 2 (2R)-3-phosphoglycerate + 2 H(+) = D-ribulose 1,5-bisphosphate + CO2 + H2O. It carries out the reaction D-ribulose 1,5-bisphosphate + O2 = 2-phosphoglycolate + (2R)-3-phosphoglycerate + 2 H(+). In terms of biological role, ruBisCO catalyzes two reactions: the carboxylation of D-ribulose 1,5-bisphosphate, the primary event in carbon dioxide fixation, as well as the oxidative fragmentation of the pentose substrate in the photorespiration process. Both reactions occur simultaneously and in competition at the same active site. The polypeptide is Ribulose bisphosphate carboxylase large chain (Antirrhinum majus (Garden snapdragon)).